The chain runs to 879 residues: Alanine--tRNA ligase (879 aa).

Zn(2+) contacts are provided by His566, His570, Cys668, and His672.

This sequence belongs to the class-II aminoacyl-tRNA synthetase family. Zn(2+) is required as a cofactor.

It localises to the cytoplasm. The enzyme catalyses tRNA(Ala) + L-alanine + ATP = L-alanyl-tRNA(Ala) + AMP + diphosphate. Functionally, catalyzes the attachment of alanine to tRNA(Ala) in a two-step reaction: alanine is first activated by ATP to form Ala-AMP and then transferred to the acceptor end of tRNA(Ala). Also edits incorrectly charged Ser-tRNA(Ala) and Gly-tRNA(Ala) via its editing domain. This is Alanine--tRNA ligase from Listeria welshimeri serovar 6b (strain ATCC 35897 / DSM 20650 / CCUG 15529 / CIP 8149 / NCTC 11857 / SLCC 5334 / V8).